The following is a 409-amino-acid chain: NADH-quinone oxidoreductase subunit D (409 aa).

This sequence belongs to the complex I 49 kDa subunit family. NDH-1 is composed of 14 different subunits. Subunits NuoB, C, D, E, F, and G constitute the peripheral sector of the complex.

Its subcellular location is the cell inner membrane. It catalyses the reaction a quinone + NADH + 5 H(+)(in) = a quinol + NAD(+) + 4 H(+)(out). Its function is as follows. NDH-1 shuttles electrons from NADH, via FMN and iron-sulfur (Fe-S) centers, to quinones in the respiratory chain. The immediate electron acceptor for the enzyme in this species is believed to be ubiquinone. Couples the redox reaction to proton translocation (for every two electrons transferred, four hydrogen ions are translocated across the cytoplasmic membrane), and thus conserves the redox energy in a proton gradient. The polypeptide is NADH-quinone oxidoreductase subunit D (Helicobacter pylori (strain P12)).